Consider the following 201-residue polypeptide: Potassium-transporting ATPase KdpC subunit (201 aa).

The helical transmembrane segment at 7–27 threads the bilayer; that stretch reads PAIVLLLVLTAITGLAYPLAM.

This sequence belongs to the KdpC family. In terms of assembly, the system is composed of three essential subunits: KdpA, KdpB and KdpC.

The protein localises to the cell inner membrane. Functionally, part of the high-affinity ATP-driven potassium transport (or Kdp) system, which catalyzes the hydrolysis of ATP coupled with the electrogenic transport of potassium into the cytoplasm. This subunit acts as a catalytic chaperone that increases the ATP-binding affinity of the ATP-hydrolyzing subunit KdpB by the formation of a transient KdpB/KdpC/ATP ternary complex. The sequence is that of Potassium-transporting ATPase KdpC subunit from Bradyrhizobium diazoefficiens (strain JCM 10833 / BCRC 13528 / IAM 13628 / NBRC 14792 / USDA 110).